A 1555-amino-acid polypeptide reads, in one-letter code: Phospholipid-transporting ATPase DNF1 (1555 aa).

Positions 1 to 85 are disordered; that stretch reads MAPPQEEGGG…SSNNGGSAPR (85 aa). Topologically, residues 1–134 are cytoplasmic; it reads MAPPQEEGGG…PKNLWFQFHN (134 aa). Residues 22–37 show a composition bias toward basic residues; the sequence is WATRRLTVKSGARKRL. Positions 72–82 are enriched in low complexity; that stretch reads GSISSSNNGGS. A helical transmembrane segment spans residues 135 to 155; it reads IANIFFLFLVILVIFPIFGGV. Asn-156 is a topological domain (extracellular). A helical membrane pass occupies residues 157–177; sequence PGLNSVPLIVIITVTAIKDAI. The Cytoplasmic segment spans residues 178–491; sequence EDYRRTILDI…ARIARELNFN (314 aa). Positions 257–288 are disordered; the sequence is TRTAPWDPSHRRSVASHTEEIQMTPVPSPVPH. The helical transmembrane segment at 492-512 threads the bilayer; that stretch reads VICNFGILLIMCLIAAIANGI. Residues 513–537 are Extracellular-facing; the sequence is AWGKTDASLAWFEYGSIGGTPALTG. The helical transmembrane segment at 538 to 558 threads the bilayer; that stretch reads FITFWAAVIVFQNLVPISLYI. At 559–1123 the chain is on the cytoplasmic side; that stretch reads SLEIVRTLQA…TISNFFYKNM (565 aa). Residue Asp-606 is the 4-aspartylphosphate intermediate of the active site. ATP is bound by residues Asp-606, Lys-607, Thr-608, Glu-740, Phe-781, Ser-783, Lys-786, Lys-804, Arg-839, Thr-840, Thr-919, Gly-920, Asp-921, Arg-1031, and Lys-1037. Asp-606 contacts Mg(2+). Thr-608 provides a ligand contact to Mg(2+). Position 1057 (Asp-1057) interacts with Mg(2+). 2 residues coordinate ATP: Asn-1060 and Asp-1061. Mg(2+) is bound at residue Asp-1061. The helical transmembrane segment at 1124 to 1144 threads the bilayer; it reads IWTWSIFWYQCYCNFDIAYIF. Residues 1145–1146 are Extracellular-facing; it reads EY. The helical transmembrane segment at 1147 to 1167 threads the bilayer; sequence TYILMFNLFFTSVPVILMGVL. Topologically, residues 1168 to 1200 are cytoplasmic; that stretch reads DQDVSDTVSLAVPQLYRRGIERKEWTQTKFWLY. Residues 1201–1221 form a helical membrane-spanning segment; it reads MIDGVYQSVMSFFIPFIFVVL. Residues 1222–1237 are Extracellular-facing; the sequence is TPTAAGNGLDVSERTR. A helical transmembrane segment spans residues 1238 to 1258; the sequence is LGAYIAHPAVITINGYILINT. Topologically, residues 1259–1262 are cytoplasmic; sequence YRWD. The chain crosses the membrane as a helical span at residues 1263 to 1283; the sequence is WLMLLSIVLSDVFIFFWTGVY. At 1284–1302 the chain is on the extracellular side; it reads TATTYSAGFYQAAPQVYQE. Residues 1303–1323 form a helical membrane-spanning segment; that stretch reads LTFWMCLIVTPALCLLPRLVV. Arg-1320 is a binding site for a 1,2-diacyl-sn-glycero-3-phospho-L-serine. The Cytoplasmic segment spans residues 1324–1555; sequence KCIQKQRFPY…EGEPPREPPM (232 aa). Disordered regions lie at residues 1364 to 1456 and 1489 to 1555; these read VEGE…ERTR and ESTH…EPPM. Residues 1406-1432 are compositionally biased toward polar residues; sequence ATHNTRAQNGSDGTTYIMQSRTSTELQ. Basic and acidic residues-rich tracts occupy residues 1436 to 1456 and 1540 to 1555; these read PFDRDREEETPAVRPSIERTR and KSIDTTEGEPPREPPM.

It belongs to the cation transport ATPase (P-type) (TC 3.A.3) family. Type IV subfamily. As to quaternary structure, component of a flippase complex consisting of DNF1 and CDC50. Interacts with CDC50; the interaction is direct. Mg(2+) is required as a cofactor.

The protein localises to the cell membrane. Its subcellular location is the endosome membrane. The protein resides in the golgi apparatus. It localises to the trans-Golgi network membrane. It catalyses the reaction ATP + H2O + phospholipidSide 1 = ADP + phosphate + phospholipidSide 2.. The enzyme catalyses a 1,2-diacyl-sn-glycero-3-phosphoethanolamine(out) + ATP + H2O = a 1,2-diacyl-sn-glycero-3-phosphoethanolamine(in) + ADP + phosphate + H(+). The catalysed reaction is a 1,2-diacyl-sn-glycero-3-phosphocholine(out) + ATP + H2O = a 1,2-diacyl-sn-glycero-3-phosphocholine(in) + ADP + phosphate + H(+). It carries out the reaction a beta-D-glucosyl-(1&lt;-&gt;1')-N-acylsphing-4-enine(out) + ATP + H2O = a beta-D-glucosyl-(1&lt;-&gt;1')-N-acylsphing-4-enine(in) + ADP + phosphate + H(+). It catalyses the reaction a 1,2-diacyl-sn-glycero-3-phospho-L-serine(out) + ATP + H2O = a 1,2-diacyl-sn-glycero-3-phospho-L-serine(in) + ADP + phosphate + H(+). Its function is as follows. Catalytic component of a P4-ATPase flippase complex which catalyzes the hydrolysis of ATP coupled to the transport of phosphatidylcholine and phosphatidylserine from the lumenal to the cytosolic leaflet of membranes and ensures the maintenance of asymmetric distribution of phospholipids. May also transport glucosylceramide and phosphatidylethanolamine. The sequence is that of Phospholipid-transporting ATPase DNF1 from Chaetomium thermophilum (strain DSM 1495 / CBS 144.50 / IMI 039719) (Thermochaetoides thermophila).